A 346-amino-acid chain; its full sequence is MQLANNKWRVFGTGWLIDWKKPKRTHNLSEPFYLYLATNLHIAVALSNPKDYAPFNKASIGNSLTTVFCLGKYINPQLFKLRTDVSNAFVSIQTSTIPKTAFVARDFVPLQNRGNQWVAPVRASEDDPALAKSYLDFAIIEVPLFLHNQMDKQIYDHFMRPAINTYERLGNSVGIFAYQPMASFKRDSYFALGYPQVESNIAALNLNQTEVKPTRPEDVAQVTFKEPWSVDHHREIPTLTTNQLTTIKTKHFSGSKLSWPFDHTKSFKIKNKWLGQNYQMYGHGLGIDQVNLRKGTSSSLVINQKRQIVGIYFATVITNPKKAVRNDVGLVQMLRFQGEGNSLNPN.

It belongs to the MG067/MG068/MG395 family.

This is an uncharacterized protein from Mycoplasma pneumoniae (strain ATCC 29342 / M129 / Subtype 1) (Mycoplasmoides pneumoniae).